The primary structure comprises 396 residues: Phosphoglycerate kinase (396 aa).

Residues 19–21 (DFN), Arg35, 58–61 (HLGR), Arg117, and Arg150 each bind substrate. ATP contacts are provided by residues Lys201, Glu323, and 349 to 352 (GGDT).

It belongs to the phosphoglycerate kinase family. As to quaternary structure, monomer.

The protein resides in the cytoplasm. It carries out the reaction (2R)-3-phosphoglycerate + ATP = (2R)-3-phospho-glyceroyl phosphate + ADP. It participates in carbohydrate degradation; glycolysis; pyruvate from D-glyceraldehyde 3-phosphate: step 2/5. The sequence is that of Phosphoglycerate kinase from Desulfosudis oleivorans (strain DSM 6200 / JCM 39069 / Hxd3) (Desulfococcus oleovorans).